Reading from the N-terminus, the 454-residue chain is tRNA-2-methylthio-N(6)-dimethylallyladenosine synthase (454 aa).

The MTTase N-terminal domain maps to 6-122; sequence RRYHITTYGC…LQDLLEQVAS (117 aa). [4Fe-4S] cluster contacts are provided by C15, C51, C85, C157, C161, and C164. A Radical SAM core domain is found at 143–384; it reads RDSAVTAWVN…GVCAELRSQR (242 aa). Residues 383-447 form the TRAM domain; the sequence is QRYANRIEEV…SFSLTGEPLS (65 aa).

The protein belongs to the methylthiotransferase family. MiaB subfamily. In terms of assembly, monomer. The cofactor is [4Fe-4S] cluster.

It localises to the cytoplasm. The catalysed reaction is N(6)-dimethylallyladenosine(37) in tRNA + (sulfur carrier)-SH + AH2 + 2 S-adenosyl-L-methionine = 2-methylsulfanyl-N(6)-dimethylallyladenosine(37) in tRNA + (sulfur carrier)-H + 5'-deoxyadenosine + L-methionine + A + S-adenosyl-L-homocysteine + 2 H(+). In terms of biological role, catalyzes the methylthiolation of N6-(dimethylallyl)adenosine (i(6)A), leading to the formation of 2-methylthio-N6-(dimethylallyl)adenosine (ms(2)i(6)A) at position 37 in tRNAs that read codons beginning with uridine. The protein is tRNA-2-methylthio-N(6)-dimethylallyladenosine synthase of Acaryochloris marina (strain MBIC 11017).